A 283-amino-acid chain; its full sequence is Cyclin-C (283 aa).

Positions Asn46–Glu144 constitute a Cyclin N-terminal domain. The disordered stretch occupies residues Ser252 to Ser283. A compositionally biased stretch (polar residues) spans Asp267–Ser283.

It belongs to the cyclin family. Cyclin C subfamily. In terms of assembly, component of the Mediator complex. The cylin/CDK pair formed by ccnc/cdk8 also associates with the large subunit of RNA polymerase II.

It is found in the nucleus. Functionally, component of the Mediator complex, a coactivator involved in regulated gene transcription of nearly all RNA polymerase II-dependent genes. Mediator functions as a bridge to convey information from gene-specific regulatory proteins to the basal RNA polymerase II transcription machinery. Mediator is recruited to promoters by direct interactions with regulatory proteins and serves as a scaffold for the assembly of a functional preinitiation complex with RNA polymerase II and the general transcription factors. Binds to and activates cyclin-dependent kinase cdk8 that phosphorylates the CTD (C-terminal domain) of the large subunit of RNA polymerase II (RNAp II), which may inhibit the formation of a transcription initiation complex. This is Cyclin-C (ccnc) from Xenopus laevis (African clawed frog).